Here is a 362-residue protein sequence, read N- to C-terminus: 3-dehydroquinate synthase (362 aa).

Residues Asp-71–Lys-76, Gly-105–Asp-109, Thr-129–Thr-130, Lys-142, and Lys-151 contribute to the NAD(+) site. Positions 184, 248, and 265 each coordinate Zn(2+).

This sequence belongs to the sugar phosphate cyclases superfamily. Dehydroquinate synthase family. The cofactor is Co(2+). Zn(2+) serves as cofactor. NAD(+) is required as a cofactor.

It localises to the cytoplasm. It carries out the reaction 7-phospho-2-dehydro-3-deoxy-D-arabino-heptonate = 3-dehydroquinate + phosphate. It functions in the pathway metabolic intermediate biosynthesis; chorismate biosynthesis; chorismate from D-erythrose 4-phosphate and phosphoenolpyruvate: step 2/7. Its function is as follows. Catalyzes the conversion of 3-deoxy-D-arabino-heptulosonate 7-phosphate (DAHP) to dehydroquinate (DHQ). The protein is 3-dehydroquinate synthase of Hamiltonella defensa subsp. Acyrthosiphon pisum (strain 5AT).